The chain runs to 497 residues: Glycerol kinase (497 aa).

Thr-12 contacts ADP. Positions 12, 13, and 14 each coordinate ATP. Thr-12 contacts sn-glycerol 3-phosphate. Arg-16 is an ADP binding site. Sn-glycerol 3-phosphate contacts are provided by Arg-82, Glu-83, Tyr-134, and Asp-243. The glycerol site is built by Arg-82, Glu-83, Tyr-134, Asp-243, and Gln-244. Residues Thr-265 and Gly-308 each contribute to the ADP site. ATP-binding residues include Thr-265, Gly-308, Gln-312, and Gly-409. Positions 409 and 413 each coordinate ADP.

This sequence belongs to the FGGY kinase family. Homotetramer and homodimer (in equilibrium).

It catalyses the reaction glycerol + ATP = sn-glycerol 3-phosphate + ADP + H(+). Its pathway is polyol metabolism; glycerol degradation via glycerol kinase pathway; sn-glycerol 3-phosphate from glycerol: step 1/1. Activated by phosphorylation and inhibited by fructose 1,6-bisphosphate (FBP). In terms of biological role, key enzyme in the regulation of glycerol uptake and metabolism. Catalyzes the phosphorylation of glycerol to yield sn-glycerol 3-phosphate. This is Glycerol kinase from Thermoanaerobacter pseudethanolicus (strain ATCC 33223 / 39E) (Clostridium thermohydrosulfuricum).